Consider the following 320-residue polypeptide: tRNA pseudouridine synthase B (320 aa).

Aspartate 41 acts as the Nucleophile in catalysis. Disordered stretches follow at residues 116 to 136 and 259 to 284; these read PPQVSAVHVQGERAHARARRG and DQCQPAPKPLASDQQESAPNQTDPSA. The span at 125 to 136 shows a compositional bias: basic and acidic residues; it reads QGERAHARARRG. The span at 270–284 shows a compositional bias: polar residues; that stretch reads SDQQESAPNQTDPSA.

This sequence belongs to the pseudouridine synthase TruB family. Type 1 subfamily.

The enzyme catalyses uridine(55) in tRNA = pseudouridine(55) in tRNA. Its function is as follows. Responsible for synthesis of pseudouridine from uracil-55 in the psi GC loop of transfer RNAs. This is tRNA pseudouridine synthase B from Prochlorococcus marinus (strain MIT 9313).